The following is a 457-amino-acid chain: Protein unc-93 homolog A (457 aa).

Transmembrane regions (helical) follow at residues 8–28, 42–62, 65–85, 86–106, and 140–160; these read VLVLSFGFLLLFTAYGGLQSL, ALSTLYGGMLLSSMFLPPVLI, LGCKWTLVLAMCCYVAFSLGN, FYASWYTLIPASVLVGLGAAA, and IFFLIFQSSGVWGNLISSLVF. N-linked (GlcNAc...) asparagine glycosylation is present at Asn190. Helical transmembrane passes span 202-222, 257-277, 291-311, 320-340, 344-364, and 395-415; these read TLLGIYTGCGFLAVLLMAVFL, LRLLILLPMLSGFEQAFLSGD, FVGYVMICFGAADALCSVLFG, TVLFALGAVTQLACIIALLLW, PSQLPVFFVFPSLWGMADAVW, and FVIAFGYSTFLCVSVKLYVLL. Residues 438–457 form a disordered region; the sequence is GPLAAGRTKPAEDGATQTKL.

Belongs to the unc-93 family.

The protein localises to the cell membrane. The chain is Protein unc-93 homolog A (UNC93A) from Bos taurus (Bovine).